The primary structure comprises 208 residues: ATP phosphoribosyltransferase (208 aa).

Belongs to the ATP phosphoribosyltransferase family. Short subfamily. In terms of assembly, heteromultimer composed of HisG and HisZ subunits.

It localises to the cytoplasm. It carries out the reaction 1-(5-phospho-beta-D-ribosyl)-ATP + diphosphate = 5-phospho-alpha-D-ribose 1-diphosphate + ATP. The protein operates within amino-acid biosynthesis; L-histidine biosynthesis; L-histidine from 5-phospho-alpha-D-ribose 1-diphosphate: step 1/9. Its function is as follows. Catalyzes the condensation of ATP and 5-phosphoribose 1-diphosphate to form N'-(5'-phosphoribosyl)-ATP (PR-ATP). Has a crucial role in the pathway because the rate of histidine biosynthesis seems to be controlled primarily by regulation of HisG enzymatic activity. The protein is ATP phosphoribosyltransferase of Clostridioides difficile (strain 630) (Peptoclostridium difficile).